We begin with the raw amino-acid sequence, 573 residues long: Septation ring formation regulator EzrA (573 aa).

Topologically, residues 1–2 are extracellular; sequence MQ. Residues 3–21 form a helical membrane-spanning segment; sequence VAIGIVVVAIVIYAAVKGF. The Cytoplasmic portion of the chain corresponds to 22 to 573; that stretch reads QFYIDKQVRQ…KQADKMNDEA (552 aa). Coiled coils occupy residues 100–188, 317–364, and 416–488; these read DAQQ…LAKA, LTHA…VYQA, and ETLQ…TLKE.

Belongs to the EzrA family.

Its subcellular location is the cell membrane. Negative regulator of FtsZ ring formation; modulates the frequency and position of FtsZ ring formation. Inhibits FtsZ ring formation at polar sites. Interacts either with FtsZ or with one of its binding partners to promote depolymerization. In Lactiplantibacillus plantarum (strain ATCC BAA-793 / NCIMB 8826 / WCFS1) (Lactobacillus plantarum), this protein is Septation ring formation regulator EzrA.